We begin with the raw amino-acid sequence, 373 residues long: Leucine aminopeptidase 1 (373 aa).

An N-terminal signal peptide occupies residues 1 to 18 (MKLLSVLALSATATSVLG). Asn-136 is a glycosylation site (N-linked (GlcNAc...) asparagine). Residues His-176 and Asp-195 each coordinate Zn(2+). Asn-196 is a glycosylation site (N-linked (GlcNAc...) asparagine). Zn(2+) is bound by residues Glu-234 and Asp-261. An N-linked (GlcNAc...) asparagine glycan is attached at Asn-284. Cys-310 and Cys-314 are oxidised to a cystine. His-343 contributes to the Zn(2+) binding site.

It belongs to the peptidase M28 family. M28E subfamily. Monomer. Zn(2+) is required as a cofactor.

It localises to the secreted. In terms of biological role, extracellular aminopeptidase which contributes to pathogenicity. This Trichophyton equinum (Horse ringworm fungus) protein is Leucine aminopeptidase 1 (LAP1).